We begin with the raw amino-acid sequence, 497 residues long: Interferon regulatory factor 5 (497 aa).

The Nuclear localization signal signature appears at 12–18 (PRRVRLK). A DNA-binding region (IRF tryptophan pentad repeat) is located at residues 14-122 (RVRLKPWLVA…QPYKIYEVCS (109 aa)). A disordered region spans residues 124–178 (GPAPTESQPTDDYVLGEEEEEEEEELQRMLPGLSITEPALPGPPNAPYSLPKEDT). Residues 137-148 (VLGEEEEEEEEE) are compositionally biased toward acidic residues. A Nuclear export signal motif is present at residues 149-159 (LQRMLPGLSIT). At S157 the chain carries Phosphoserine; by TBK1. Residue S300 is modified to Phosphoserine. Glycyl lysine isopeptide (Lys-Gly) (interchain with G-Cter in ubiquitin) cross-links involve residues K410 and K411. Residue S430 is modified to Phosphoserine. S434 carries the phosphoserine; by IKKB modification. 2 positions are modified to phosphoserine: S436 and S439. A Phosphoserine; by IKKB modification is found at S445.

Belongs to the IRF family. As to quaternary structure, homodimer, when phosphorylated. Interacts with TASL (via pLxIS motif); interaction takes place downstream of TLR7, TLR8 or TLR9, leading to its activation. Interacts with MYD88 and TRAF6. Post-translationally, phosphorylation of serine and threonine residues by IKBKB in a C-terminal autoinhibitory region, stimulates dimerization, transport into the nucleus, assembly with the coactivator CBP/EP300 and initiation of transcription. In terms of processing, 'Lys-63'-linked polyubiquitination by TRAF6 is required for activation.

The protein resides in the cytoplasm. Its subcellular location is the nucleus. With respect to regulation, maintained as a monomer in an autoinhibited state. Phosphorylation and activation follow the following steps: innate adapter protein TASL recruits IRF5, thereby licensing IRF5 for phosphorylation by IKBKB. Phosphorylated IRF5 dissociates from the adapter proteins, dimerizes, and then enters the nucleus to induce IFNs. In terms of biological role, transcription factor that plays a critical role in innate immunity by activating expression of type I interferon (IFN) IFNA and INFB and inflammatory cytokines downstream of endolysosomal toll-like receptors TLR7, TLR8 and TLR9. Regulates the transcription of type I IFN genes (IFN-alpha and IFN-beta) and IFN-stimulated genes (ISG) by binding to an interferon-stimulated response element (ISRE) in their promoters. Can efficiently activate both the IFN-beta (IFNB) and the IFN-alpha (IFNA) genes and mediate their induction downstream of the TLR-activated, MyD88-dependent pathway. In Mus musculus (Mouse), this protein is Interferon regulatory factor 5.